Reading from the N-terminus, the 349-residue chain is 11-beta-hydroxysteroid dehydrogenase A (349 aa).

A helical; Signal-anchor for type II membrane protein membrane pass occupies residues 10-30; it reads LVAPPFTFFFLCLFLPPYWGL. Residues 13–26 carry the Proline-knob motif; that stretch reads PPFTFFFLCLFLPP. NADP(+)-binding positions include 54 to 80, D105, and 132 to 135; these read GASS…SARR and NAAI. Residue S184 coordinates substrate. The Proton acceptor role is filled by Y197. Residues 197–201 and K201 each bind NADP(+); that span reads YSASK.

The protein belongs to the short-chain dehydrogenases/reductases (SDR) family. Expressed in seeds (at protein level).

The protein localises to the lipid droplet. Its subcellular location is the membrane. It catalyses the reaction an 11beta-hydroxysteroid + NADP(+) = an 11-oxosteroid + NADPH + H(+). Functionally, has dehydrogenase activity against 11 beta-hydroxysteroid and 17 beta-hydroxysteroid. May be involved in signal transduction regulated by various sterols. This chain is 11-beta-hydroxysteroid dehydrogenase A, found in Arachis hypogaea (Peanut).